The primary structure comprises 477 residues: PTS system glucose-specific EIICB component (477 aa).

At 1 to 14 (MFKNAFANLQKVGK) the chain is on the cytoplasmic side. In terms of domain architecture, PTS EIIC type-1 spans 1 to 388 (MFKNAFANLQ…LDLKTPGRED (388 aa)). Residues 15–35 (SLMLPVSVLPIAGILLGVGSA) form a helical membrane-spanning segment. Residues 36–50 (NFSWLPAVVSHVMAE) are Periplasmic-facing. Residues 51–71 (AGGSVFANMPLIFAIGVALGF) traverse the membrane as a helical segment. Residues 72–79 (TNNDGVSA) lie on the Cytoplasmic side of the membrane. Residues 80-100 (LAAVVAYGIMVKTMAVVAPLV) traverse the membrane as a helical segment. Topologically, residues 101-111 (LHLPAEEIAAK) are periplasmic. A helical transmembrane segment spans residues 112-132 (HLADTGVLGGIISGAIAAYMF). Topologically, residues 133-151 (NRFYRIKLPEYLGFFAGKR) are cytoplasmic. A helical transmembrane segment spans residues 152–172 (FVPIISGLAAIFTGVVLSFVW). Over 173–190 (PPIGTAIQAFSQWAAYQN) the chain is Periplasmic. A helical transmembrane segment spans residues 191-211 (PVVAFGIYGFIERCLVPFGLH). The Cytoplasmic segment spans residues 212–248 (HIWNVPFQMQIGEYTNAAGQVFHGDIPRYMAGDPTAG). The helical transmembrane segment at 249–269 (MLSGGFLFKMYGLPAAAIAIW) threads the bilayer. Residues 270-279 (HSAKPENRAK) are Periplasmic-facing. A helical membrane pass occupies residues 280-300 (VGGIMISAALTSFLTGITEPI). Residues 301 to 309 (EFSFMFVAP) are Cytoplasmic-facing. The chain crosses the membrane as a helical span at residues 310–330 (ILYIIHAILAGLAFPICILLG). The Periplasmic portion of the chain corresponds to 331–355 (MRDGTSFSHGLIDFIVLSGNSSKLW). Residues 356–376 (LFPIVGAGYAIVYYTVFRVLI) traverse the membrane as a helical segment. Residues 377 to 477 (KALDLKTPGR…TEMDEYIRNS (101 aa)) are Cytoplasmic-facing. The PTS EIIB type-1 domain occupies 399–477 (SEMAPALVAA…TEMDEYIRNS (79 aa)). Residue cysteine 421 is the Phosphocysteine intermediate; for EIIB activity of the active site. A Phosphocysteine modification is found at cysteine 421.

Its subcellular location is the cell inner membrane. It carries out the reaction N(pros)-phospho-L-histidyl-[protein] + D-glucose(out) = D-glucose 6-phosphate(in) + L-histidyl-[protein]. In terms of biological role, the phosphoenolpyruvate-dependent sugar phosphotransferase system (sugar PTS), a major carbohydrate active transport system, catalyzes the phosphorylation of incoming sugar substrates concomitantly with their translocation across the cell membrane. The enzyme II complex composed of PtsG and Crr is involved in glucose transport. Also functions as a chemoreceptor monitoring the environment for changes in sugar concentration. It can also phosphorylate mannose, methyl alpha-glucoside and 2-deoxy-glucose. In Salmonella typhimurium (strain LT2 / SGSC1412 / ATCC 700720), this protein is PTS system glucose-specific EIICB component (ptsG).